A 130-amino-acid polypeptide reads, in one-letter code: uncharacterized protein (130 aa).

N102 is a glycosylation site (N-linked (GlcNAc...) asparagine). The chain crosses the membrane as a helical span at residues 110–130 (DPLAFYLMFLIIITILLIMIL).

Its subcellular location is the membrane. This is an uncharacterized protein from Dictyostelium discoideum (Social amoeba).